Consider the following 394-residue polypeptide: Elongation factor Tu 1 (394 aa).

One can recognise a tr-type G domain in the interval 10–204 (KPHVNVGTIG…ALDSYIPEPQ (195 aa)). The G1 stretch occupies residues 19 to 26 (GHVDHGKT). GTP is bound at residue 19–26 (GHVDHGKT). Position 26 (Thr-26) interacts with Mg(2+). The G2 stretch occupies residues 60–64 (GITIS). The tract at residues 81 to 84 (DCPG) is G3. GTP is bound by residues 81–85 (DCPGH) and 136–139 (NKCD). Positions 136–139 (NKCD) are G4. A G5 region spans residues 174-176 (SAL).

This sequence belongs to the TRAFAC class translation factor GTPase superfamily. Classic translation factor GTPase family. EF-Tu/EF-1A subfamily. Monomer.

The protein resides in the cytoplasm. It catalyses the reaction GTP + H2O = GDP + phosphate + H(+). GTP hydrolase that promotes the GTP-dependent binding of aminoacyl-tRNA to the A-site of ribosomes during protein biosynthesis. The sequence is that of Elongation factor Tu 1 from Pseudoalteromonas translucida (strain TAC 125).